A 508-amino-acid polypeptide reads, in one-letter code: tRNA-2-methylthio-N(6)-dimethylallyladenosine synthase (508 aa).

The interval 1–21 (MNEEQRKASGQVSSSDKKSEK) is disordered. The region spanning 65–183 (RKFYIRTYGC…LPELLSECYL (119 aa)) is the MTTase N-terminal domain. [4Fe-4S] cluster-binding residues include C74, C110, C144, C220, C224, and C227. The Radical SAM core domain maps to 206 to 436 (RQGKIKGWVN…NALVNEISAK (231 aa)). A TRAM domain is found at 439-502 (KEYEGQTVEV…TWSLDGEMVG (64 aa)).

Belongs to the methylthiotransferase family. MiaB subfamily. Monomer. It depends on [4Fe-4S] cluster as a cofactor.

It localises to the cytoplasm. It catalyses the reaction N(6)-dimethylallyladenosine(37) in tRNA + (sulfur carrier)-SH + AH2 + 2 S-adenosyl-L-methionine = 2-methylsulfanyl-N(6)-dimethylallyladenosine(37) in tRNA + (sulfur carrier)-H + 5'-deoxyadenosine + L-methionine + A + S-adenosyl-L-homocysteine + 2 H(+). Catalyzes the methylthiolation of N6-(dimethylallyl)adenosine (i(6)A), leading to the formation of 2-methylthio-N6-(dimethylallyl)adenosine (ms(2)i(6)A) at position 37 in tRNAs that read codons beginning with uridine. This chain is tRNA-2-methylthio-N(6)-dimethylallyladenosine synthase, found in Bacillus pumilus (strain SAFR-032).